The sequence spans 192 residues: Potassium-transporting ATPase KdpC subunit (192 aa).

A helical transmembrane segment spans residues 7–27; that stretch reads PLIVIFAVLTAVTGLAYPAVM.

It belongs to the KdpC family. The system is composed of three essential subunits: KdpA, KdpB and KdpC.

It localises to the cell inner membrane. Functionally, part of the high-affinity ATP-driven potassium transport (or Kdp) system, which catalyzes the hydrolysis of ATP coupled with the electrogenic transport of potassium into the cytoplasm. This subunit acts as a catalytic chaperone that increases the ATP-binding affinity of the ATP-hydrolyzing subunit KdpB by the formation of a transient KdpB/KdpC/ATP ternary complex. The polypeptide is Potassium-transporting ATPase KdpC subunit (Paraburkholderia phytofirmans (strain DSM 17436 / LMG 22146 / PsJN) (Burkholderia phytofirmans)).